Reading from the N-terminus, the 146-residue chain is Cytidine deaminase (146 aa).

Residues 13 to 140 (EHVQRLLLSS…ELLPASFGPE (128 aa)) enclose the CMP/dCMP-type deaminase domain. 54-56 (NIE) serves as a coordination point for substrate. A Zn(2+)-binding site is contributed by Cys65. Glu67 acts as the Proton donor in catalysis. Residues Cys99 and Cys102 each contribute to the Zn(2+) site.

The protein belongs to the cytidine and deoxycytidylate deaminase family. Homotetramer. It depends on Zn(2+) as a cofactor.

The catalysed reaction is cytidine + H2O + H(+) = uridine + NH4(+). The enzyme catalyses 2'-deoxycytidine + H2O + H(+) = 2'-deoxyuridine + NH4(+). This enzyme scavenges exogenous and endogenous cytidine and 2'-deoxycytidine for UMP synthesis. This is Cytidine deaminase (Cda) from Mus musculus (Mouse).